Reading from the N-terminus, the 426-residue chain is GTPase HflX (426 aa).

Positions 198 to 365 constitute a Hflx-type G domain; the sequence is PTVSLVGYTN…ALTERLSGEV (168 aa). Residues 204–211, 229–233, 251–254, 317–320, and 343–345 each bind GTP; these read GYTNAGKS, FATLD, DTVG, NKID, and SAQ. Mg(2+)-binding residues include Ser211 and Thr231.

It belongs to the TRAFAC class OBG-HflX-like GTPase superfamily. HflX GTPase family. In terms of assembly, monomer. Associates with the 50S ribosomal subunit. This interaction occurs in the presence of GTP, GDP, ATP or ADP, but not in their absence. Mg(2+) serves as cofactor.

The protein localises to the cytoplasm. Intrinsic GTPase activity is very slow and can be stimulated by the presence of 50S ribosomal subunits or 70S ribosomes. GTPase activity is inhibited by ATP. Functionally, GTPase that associates with the 50S ribosomal subunit and may have a role during protein synthesis or ribosome biogenesis. In vitro, also exhibits ATPase activity. The chain is GTPase HflX from Escherichia coli (strain K12).